We begin with the raw amino-acid sequence, 310 residues long: N-acetyl-gamma-glutamyl-phosphate reductase (310 aa).

The active site involves Cys117.

The protein belongs to the NAGSA dehydrogenase family. Type 2 subfamily.

It localises to the cytoplasm. It carries out the reaction N-acetyl-L-glutamate 5-semialdehyde + phosphate + NADP(+) = N-acetyl-L-glutamyl 5-phosphate + NADPH + H(+). It participates in amino-acid biosynthesis; L-arginine biosynthesis; N(2)-acetyl-L-ornithine from L-glutamate: step 3/4. Catalyzes the NADPH-dependent reduction of N-acetyl-5-glutamyl phosphate to yield N-acetyl-L-glutamate 5-semialdehyde. In Rhizobium etli (strain CIAT 652), this protein is N-acetyl-gamma-glutamyl-phosphate reductase.